A 263-amino-acid chain; its full sequence is Adaptin ear-binding coat-associated protein 2 (263 aa).

2 disordered regions span residues 167 to 191 (KKEGAAGAPRTRPASAGGLSLLPPP) and 209 to 263 (GGSL…WVQF). Residue S181 is modified to Phosphoserine. 2 consecutive short sequence motifs (WXXF motif) follow at residues 218–221 (GSGG) and 238–241 (DIWG). Low complexity predominate over residues 246-263 (STGSPSSQSQPGTGWVQF).

It belongs to the NECAP family. Interacts with AP1G1 and AP2A1 components of the adapter protein complexes AP-1 and AP-2. Interacts with the GAE domain proteins GGA1, GGA2 and GGA3. Expressed in brain, heart, kidney, liver and lung (at protein level).

The protein resides in the cytoplasmic vesicle. It is found in the clathrin-coated vesicle membrane. It localises to the cell membrane. Its function is as follows. Involved in endocytosis. In Rattus norvegicus (Rat), this protein is Adaptin ear-binding coat-associated protein 2 (Necap2).